The following is a 411-amino-acid chain: MASLAQQLAGGLRCPPLSNSNLSKPFSPKHTLKPRFSPIVSAVAVSNAQTRERQKLKQLFEDAYERCRNAPMEGVSFTIDDFHTALDKYDFNSEMGSRVKGTVFCTDANGALVDITAKSSAYLPLAEACIYRIKNVEEAGIIPGVREEFVIIGENEADDSLILSLRQIQYELAWERCRQLQAEDVVVKGKIVGANKGGVVALVEGLRGFVPFSQISSKSSAEELLEKEIPLKFVEVDEEQSRLVMSNRKAMADSQAQLGIGSVVTGTVQSLKPYGAFIDIGGINGLLHVSQISHDRVSDIATVLQPGDTLKVMILSHDRERGRVSLSTKKLEPTPGDMIRNPKLVFEKAEEMAQTFRQRIAQAEAMARADMLRFQPESGLTLSSDGILGPLTSDLPAEGLDLSVVPPAVES.

The N-terminal 41 residues, 1-41 (MASLAQQLAGGLRCPPLSNSNLSKPFSPKHTLKPRFSPIVS), are a transit peptide targeting the chloroplast. 3 S1 motif domains span residues 96 to 166 (GSRV…LSLR), 184 to 248 (DVVV…MSNR), and 261 to 329 (GSVV…LSTK).

The protein belongs to the bacterial ribosomal protein bS1 family. Component of the chloroplast small ribosomal subunit (SSU). Mature 70S chloroplast ribosomes of higher plants consist of a small (30S) and a large (50S) subunit. The 30S small subunit contains 1 molecule of ribosomal RNA (16S rRNA) and 24 different proteins. The 50S large subunit contains 3 rRNA molecules (23S, 5S and 4.5S rRNA) and 33 different proteins.

It is found in the plastid. The protein resides in the chloroplast. In terms of biological role, component of the chloroplast ribosome (chloro-ribosome), a dedicated translation machinery responsible for the synthesis of chloroplast genome-encoded proteins, including proteins of the transcription and translation machinery and components of the photosynthetic apparatus. Actively engaged in the initiation complex formation via a strong mRNA-binding activity. Possesses a poly(A)-binding activity which might play a role as a control element in chloroplast mRNA translation. The polypeptide is Small ribosomal subunit protein bS1c (RPS1) (Spinacia oleracea (Spinach)).